The chain runs to 441 residues: POC1 centriolar protein homolog A (441 aa).

WD repeat units follow at residues 16–55 (GHRD…RAYR), 58–97 (GHKD…ESTV), 100–139 (AHTG…FLFS), 142–181 (QHIN…CIHS), 184–223 (EHGG…LIQH), 226–265 (VHSG…LLYT), and 268–307 (GHQG…ASYA). The tract at residues 323-380 (DYTSGVPAADRHRPERNAQTDQADDLEPRHIQMSAKDRSSPLSYTSRSIDQHHPQAED) is disordered. Composition is skewed to basic and acidic residues over residues 331-340 (ADRHRPERNA), 348-361 (LEPR…KDRS), and 371-380 (IDQHHPQAED). The stretch at 400–427 (LTRTVGILEQRLSLTEDKLKECIDNQQA) forms a coiled coil.

Belongs to the WD repeat POC1 family. As to quaternary structure, interacts with pat.

Its subcellular location is the cytoplasm. The protein localises to the cytoskeleton. May play an important role in centriole assembly and/or stability and ciliogenesis. The polypeptide is POC1 centriolar protein homolog A (poc1a) (Xenopus tropicalis (Western clawed frog)).